We begin with the raw amino-acid sequence, 483 residues long: Probable 4-aminobutyrate aminotransferase, mitochondrial (483 aa).

148–149 is a pyridoxal 5'-phosphate binding site; it reads GT. A substrate-binding site is contributed by Arg204. Residue Lys341 is modified to N6-(pyridoxal phosphate)lysine. Thr365 serves as a coordination point for pyridoxal 5'-phosphate.

This sequence belongs to the class-III pyridoxal-phosphate-dependent aminotransferase family. Homodimer. Pyridoxal 5'-phosphate is required as a cofactor.

The protein localises to the mitochondrion matrix. The catalysed reaction is 4-aminobutanoate + 2-oxoglutarate = succinate semialdehyde + L-glutamate. The enzyme catalyses (S)-3-amino-2-methylpropanoate + 2-oxoglutarate = 2-methyl-3-oxopropanoate + L-glutamate. The chain is Probable 4-aminobutyrate aminotransferase, mitochondrial (gta-1) from Caenorhabditis elegans.